The sequence spans 346 residues: Very-long-chain 3-oxoacyl-CoA reductase (346 aa).

A helical membrane pass occupies residues 19 to 39 (LIYGVLFVGVYKITTFTLSVG). NADP(+) contacts are provided by valine 65, aspartate 119, asparagine 146, tyrosine 220, lysine 224, valine 253, and serine 255. Catalysis depends on tyrosine 220, which acts as the Proton donor. Lysine 224 functions as the Lowers pKa of active site Tyr in the catalytic mechanism.

Belongs to the short-chain dehydrogenases/reductases (SDR) family.

The protein localises to the endoplasmic reticulum membrane. It catalyses the reaction a very-long-chain (3R)-3-hydroxyacyl-CoA + NADP(+) = a very-long-chain 3-oxoacyl-CoA + NADPH + H(+). It functions in the pathway lipid metabolism; fatty acid biosynthesis. Functionally, component of the microsomal membrane bound fatty acid elongation system, which produces the 26-carbon very long-chain fatty acids (VLCFA) from palmitate. Catalyzes the reduction of the 3-ketoacyl-CoA intermediate that is formed in each cycle of fatty acid elongation. VLCFAs serve as precursors for ceramide and sphingolipids. The protein is Very-long-chain 3-oxoacyl-CoA reductase of Debaryomyces hansenii (strain ATCC 36239 / CBS 767 / BCRC 21394 / JCM 1990 / NBRC 0083 / IGC 2968) (Yeast).